We begin with the raw amino-acid sequence, 426 residues long: MLTIKDVHALEVMDSRGNPTIQASVILSDNTKASAIVPSGASTGKREALELRDNDKTRFLGKGVLRACENVNSVIKHHLIGLEAINQAFVDERLRALDGTPNYANLGANAVLGVSMALARASAKALNLPLYRYLGGANALTLPVPMLNIINGGTHANNSIDFQEYMIMPLGFESFREALRASAEVYHTLKKLLDGKNQLTSVGDEGGFAPNFNNNVEPLEVISQAIEKAGYKLGEEIALALDVASSELVDENFNYHLKGENKILDSHELVAYYKKFVAKYPIVSIEDGLSEDDWEGWAFLSKELGRQIQLVGDDLFVTNASLLQKGIEKNIANAILIKPNQIGTISETLETIRLAKHHAYQCVMSHRSGESEDSFIADFAVALNTGEIKTGSTARSERIAKYNRLLEIEHELKGGIYIGKELFKHG.

(2R)-2-phosphoglycerate is bound at residue glutamine 163. Glutamate 205 acts as the Proton donor in catalysis. Positions 242, 286, and 313 each coordinate Mg(2+). (2R)-2-phosphoglycerate-binding residues include lysine 338, arginine 367, serine 368, and lysine 389. The active-site Proton acceptor is lysine 338.

It belongs to the enolase family. It depends on Mg(2+) as a cofactor.

Its subcellular location is the cytoplasm. It is found in the secreted. The protein localises to the cell surface. It carries out the reaction (2R)-2-phosphoglycerate = phosphoenolpyruvate + H2O. It participates in carbohydrate degradation; glycolysis; pyruvate from D-glyceraldehyde 3-phosphate: step 4/5. Functionally, catalyzes the reversible conversion of 2-phosphoglycerate (2-PG) into phosphoenolpyruvate (PEP). It is essential for the degradation of carbohydrates via glycolysis. This chain is Enolase, found in Helicobacter pylori (strain Shi470).